We begin with the raw amino-acid sequence, 500 residues long: Aspartyl/glutamyl-tRNA(Asn/Gln) amidotransferase subunit B (500 aa).

The protein belongs to the GatB/GatE family. GatB subfamily. As to quaternary structure, heterotrimer of A, B and C subunits.

The enzyme catalyses L-glutamyl-tRNA(Gln) + L-glutamine + ATP + H2O = L-glutaminyl-tRNA(Gln) + L-glutamate + ADP + phosphate + H(+). The catalysed reaction is L-aspartyl-tRNA(Asn) + L-glutamine + ATP + H2O = L-asparaginyl-tRNA(Asn) + L-glutamate + ADP + phosphate + 2 H(+). Allows the formation of correctly charged Asn-tRNA(Asn) or Gln-tRNA(Gln) through the transamidation of misacylated Asp-tRNA(Asn) or Glu-tRNA(Gln) in organisms which lack either or both of asparaginyl-tRNA or glutaminyl-tRNA synthetases. The reaction takes place in the presence of glutamine and ATP through an activated phospho-Asp-tRNA(Asn) or phospho-Glu-tRNA(Gln). This chain is Aspartyl/glutamyl-tRNA(Asn/Gln) amidotransferase subunit B, found in Allorhizobium ampelinum (strain ATCC BAA-846 / DSM 112012 / S4) (Agrobacterium vitis (strain S4)).